Reading from the N-terminus, the 190-residue chain is NADH-quinone oxidoreductase subunit C (190 aa).

The protein belongs to the complex I 30 kDa subunit family. As to quaternary structure, NDH-1 is composed of 14 different subunits. Subunits NuoB, C, D, E, F, and G constitute the peripheral sector of the complex.

It localises to the cell membrane. The catalysed reaction is a quinone + NADH + 5 H(+)(in) = a quinol + NAD(+) + 4 H(+)(out). In terms of biological role, NDH-1 shuttles electrons from NADH, via FMN and iron-sulfur (Fe-S) centers, to quinones in the respiratory chain. The immediate electron acceptor for the enzyme in this species is believed to be ubiquinone. Couples the redox reaction to proton translocation (for every two electrons transferred, four hydrogen ions are translocated across the cytoplasmic membrane), and thus conserves the redox energy in a proton gradient. The polypeptide is NADH-quinone oxidoreductase subunit C (Wolbachia sp. subsp. Brugia malayi (strain TRS)).